The chain runs to 200 residues: Small ribosomal subunit protein eS8A (200 aa).

2 disordered regions span residues 1–40 (MGIT…RIGP) and 123–145 (SKGK…KHSA). Basic residues predominate over residues 135 to 145 (KSKHVQRKHSA).

The protein belongs to the eukaryotic ribosomal protein eS8 family. As to quaternary structure, component of the small ribosomal subunit (SSU). Mature yeast ribosomes consist of a small (40S) and a large (60S) subunit. The 40S small subunit contains 1 molecule of ribosomal RNA (18S rRNA) and at least 33 different proteins. The large 60S subunit contains 3 rRNA molecules (25S, 5.8S and 5S rRNA) and at least 46 different proteins.

The protein localises to the cytoplasm. Its function is as follows. Component of the ribosome, a large ribonucleoprotein complex responsible for the synthesis of proteins in the cell. The small ribosomal subunit (SSU) binds messenger RNAs (mRNAs) and translates the encoded message by selecting cognate aminoacyl-transfer RNA (tRNA) molecules. The large subunit (LSU) contains the ribosomal catalytic site termed the peptidyl transferase center (PTC), which catalyzes the formation of peptide bonds, thereby polymerizing the amino acids delivered by tRNAs into a polypeptide chain. The nascent polypeptides leave the ribosome through a tunnel in the LSU and interact with protein factors that function in enzymatic processing, targeting, and the membrane insertion of nascent chains at the exit of the ribosomal tunnel. The chain is Small ribosomal subunit protein eS8A (rps801) from Schizosaccharomyces pombe (strain 972 / ATCC 24843) (Fission yeast).